The primary structure comprises 390 residues: MNKTNPTIALVAGEVSGDILGAGLIRQLKAHYPNARFIGIAGTRMLAEGCKTLVDMEELSVMGLAEILKHLPRLLKIRKNVIQTMLQEKPDVYIGIDAPDFNLDVELKLKANGIKTIHYVSPSVWAWRQNRIHKIAKATHQVLAFLPFEKAFYDKFNVPCRFIGHTMADAIPLKPNRAEACQMLQIDPAQRYLAILVGSRGSEVEFLAEPFLKTALLLKEQFPDLQLLVPLVNEKRRIQFESIKAKIAPNLDLHLIDGNARQAMIAADATLLASGTAALEAMLCKSPMVVGYRMKPLTYFLAKRLVKTDYISLPNLLANEMLVPEMIQEECTPELLAEKLSAYLSDDESAVKNRLVLIQHFTDLHQKIQCNADKQAAQAVIDLLEGKENV.

It belongs to the LpxB family.

The enzyme catalyses a lipid X + a UDP-2-N,3-O-bis[(3R)-3-hydroxyacyl]-alpha-D-glucosamine = a lipid A disaccharide + UDP + H(+). Its pathway is bacterial outer membrane biogenesis; LPS lipid A biosynthesis. Its function is as follows. Condensation of UDP-2,3-diacylglucosamine and 2,3-diacylglucosamine-1-phosphate to form lipid A disaccharide, a precursor of lipid A, a phosphorylated glycolipid that anchors the lipopolysaccharide to the outer membrane of the cell. The chain is Lipid-A-disaccharide synthase from Haemophilus influenzae (strain PittGG).